The primary structure comprises 557 residues: Formate--tetrahydrofolate ligase (557 aa).

65–72 (TPAGEGKT) is an ATP binding site.

Belongs to the formate--tetrahydrofolate ligase family. Homotetramer.

The catalysed reaction is (6S)-5,6,7,8-tetrahydrofolate + formate + ATP = (6R)-10-formyltetrahydrofolate + ADP + phosphate. It functions in the pathway one-carbon metabolism; tetrahydrofolate interconversion. This chain is Formate--tetrahydrofolate ligase (fhs), found in Methylorubrum extorquens (strain ATCC 14718 / DSM 1338 / JCM 2805 / NCIMB 9133 / AM1) (Methylobacterium extorquens).